The following is a 206-amino-acid chain: Probable chemoreceptor glutamine deamidase CheD 1 (206 aa).

Belongs to the CheD family.

It carries out the reaction L-glutaminyl-[protein] + H2O = L-glutamyl-[protein] + NH4(+). Its function is as follows. Probably deamidates glutamine residues to glutamate on methyl-accepting chemotaxis receptors (MCPs), playing an important role in chemotaxis. The protein is Probable chemoreceptor glutamine deamidase CheD 1 of Shewanella oneidensis (strain ATCC 700550 / JCM 31522 / CIP 106686 / LMG 19005 / NCIMB 14063 / MR-1).